The primary structure comprises 212 residues: Phosphatidylserine decarboxylase proenzyme (212 aa).

S182 functions as the Schiff-base intermediate with substrate; via pyruvic acid in the catalytic mechanism. S182 is subject to Pyruvic acid (Ser); by autocatalysis.

The protein belongs to the phosphatidylserine decarboxylase family. PSD-A subfamily. Heterodimer of a large membrane-associated beta subunit and a small pyruvoyl-containing alpha subunit. It depends on pyruvate as a cofactor. Is synthesized initially as an inactive proenzyme. Formation of the active enzyme involves a self-maturation process in which the active site pyruvoyl group is generated from an internal serine residue via an autocatalytic post-translational modification. Two non-identical subunits are generated from the proenzyme in this reaction, and the pyruvate is formed at the N-terminus of the alpha chain, which is derived from the carboxyl end of the proenzyme. The post-translation cleavage follows an unusual pathway, termed non-hydrolytic serinolysis, in which the side chain hydroxyl group of the serine supplies its oxygen atom to form the C-terminus of the beta chain, while the remainder of the serine residue undergoes an oxidative deamination to produce ammonia and the pyruvoyl prosthetic group on the alpha chain.

The protein localises to the cell membrane. It carries out the reaction a 1,2-diacyl-sn-glycero-3-phospho-L-serine + H(+) = a 1,2-diacyl-sn-glycero-3-phosphoethanolamine + CO2. Its pathway is phospholipid metabolism; phosphatidylethanolamine biosynthesis; phosphatidylethanolamine from CDP-diacylglycerol: step 2/2. Its function is as follows. Catalyzes the formation of phosphatidylethanolamine (PtdEtn) from phosphatidylserine (PtdSer). The polypeptide is Phosphatidylserine decarboxylase proenzyme (Paraburkholderia phymatum (strain DSM 17167 / CIP 108236 / LMG 21445 / STM815) (Burkholderia phymatum)).